The following is a 140-amino-acid chain: ATP synthase epsilon chain (140 aa).

Belongs to the ATPase epsilon chain family. As to quaternary structure, F-type ATPases have 2 components, CF(1) - the catalytic core - and CF(0) - the membrane proton channel. CF(1) has five subunits: alpha(3), beta(3), gamma(1), delta(1), epsilon(1). CF(0) has three main subunits: a, b and c.

The protein resides in the cell inner membrane. Produces ATP from ADP in the presence of a proton gradient across the membrane. This chain is ATP synthase epsilon chain, found in Yersinia pseudotuberculosis serotype O:1b (strain IP 31758).